The sequence spans 352 residues: Ribosome biogenesis protein BRX1 homolog (352 aa).

The segment at 1–47 (MAATKRKRRGDLEVQAKKPKKNRKDAGQPAKQADVAKEAEEEKDRIP) is disordered. Basic and acidic residues predominate over residues 34–46 (DVAKEAEEEKDRI). Residues 59-248 (ERILIFSSRG…LIKIFQGSFG (190 aa)) form the Brix domain. Lysine 159 is covalently cross-linked (Glycyl lysine isopeptide (Lys-Gly) (interchain with G-Cter in SUMO2)). Serine 260 carries the post-translational modification Phosphoserine. Lysine 275 is subject to N6-acetyllysine. Positions 281–301 (QVKDVQKSRKKEPKTILPHDP) are disordered. Residues lysine 313 and lysine 321 each participate in a glycyl lysine isopeptide (Lys-Gly) (interchain with G-Cter in SUMO2) cross-link.

Belongs to the BRX1 family.

It localises to the nucleus. It is found in the nucleolus. In terms of biological role, required for biogenesis of the 60S ribosomal subunit. The sequence is that of Ribosome biogenesis protein BRX1 homolog (Brix1) from Rattus norvegicus (Rat).